The sequence spans 703 residues: Cyclomaltodextrin glucanotransferase (703 aa).

The N-terminal stretch at 1 to 29 (MNDLNDFLKTILLSFIFFLLLSLPTVAEA) is a signal peptide. Residues 30–160 (DVTNKVNYSK…GIKVIMDFTP (131 aa)) are A1. Residues Asp-52, Asn-54, Asn-57, and Asn-58 each contribute to the Ca(2+) site. Residues Cys-68 and Cys-75 are joined by a disulfide bond. Positions 76 and 78 each coordinate Ca(2+). 122 to 123 (YW) is a substrate binding site. Asn-161 is a binding site for Ca(2+). Residues 161–224 (NHSSPALETN…NLYDLADYDL (64 aa)) form a b region. His-162 lines the substrate pocket. Ile-212 serves as a coordination point for Ca(2+). 215–218 (NLYD) is a binding site for substrate. Asp-221 lines the Ca(2+) pocket. Residues 225 to 428 (NNTVMDQYLK…LRQTNSALGY (204 aa)) form an A2 region. Arg-249 serves as a coordination point for substrate. Catalysis depends on Asp-251, which acts as the Nucleophile. 254 to 255 (KH) is a binding site for substrate. Ca(2+) is bound at residue His-255. Glu-279 acts as the Proton donor in catalysis. Substrate is bound by residues His-349, Asp-393, and Arg-397. The segment at 429 to 516 (GTTTERWLNE…SVAVWQVSNP (88 aa)) is c. The interval 517 to 600 (STSPLIGQVG…SPTYKEFEVL (84 aa)) is d. The region spanning 520-598 (PLIGQVGPMM…IKSPTYKEFE (79 aa)) is the IPT/TIG domain. Residues 599 to 703 (VLSGNQVSVR…TGTDTVMINW (105 aa)) enclose the CBM20 domain. An e region spans residues 601–703 (SGNQVSVRFG…TGTDTVMINW (103 aa)).

Belongs to the glycosyl hydrolase 13 family. As to quaternary structure, monomer. Requires Ca(2+) as cofactor.

Its subcellular location is the secreted. The enzyme catalyses Cyclizes part of a (1-&gt;4)-alpha-D-glucan chain by formation of a (1-&gt;4)-alpha-D-glucosidic bond.. The chain is Cyclomaltodextrin glucanotransferase (cgt) from Bacillus sp. (strain 1-1).